The chain runs to 554 residues: Carboxylesterase 1C (554 aa).

The first 18 residues, 1 to 18 (MWLHALVWASLAVCPILG), serve as a signal peptide directing secretion. The N-linked (GlcNAc...) asparagine glycan is linked to Asn79. Cys87 and Cys116 form a disulfide bridge. The active-site Acyl-ester intermediate is the Ser221. A disulfide bridge links Cys273 with Cys284. N-linked (GlcNAc...) asparagine glycans are attached at residues Asn274 and Asn304. Glu342 serves as the catalytic Charge relay system. N-linked (GlcNAc...) asparagine glycosylation is present at Asn377. His455 functions as the Charge relay system in the catalytic mechanism. A Phosphoserine modification is found at Ser473. Asn478 is a glycosylation site (N-linked (GlcNAc...) asparagine). The Prevents secretion from ER signature appears at 551–554 (TEHK).

Belongs to the type-B carboxylesterase/lipase family. In terms of tissue distribution, expressed in lung, kidney and liver.

The protein localises to the endoplasmic reticulum lumen. It carries out the reaction a carboxylic ester + H2O = an alcohol + a carboxylate + H(+). Functionally, involved in the detoxification of xenobiotics and in the activation of ester and amide prodrugs. Involved in the extracellular metabolism of lung surfactant. The chain is Carboxylesterase 1C (Ces1c) from Mus musculus (Mouse).